Consider the following 535-residue polypeptide: T-complex protein 1 subunit zeta 1 (535 aa).

It belongs to the TCP-1 chaperonin family. Heterooligomeric complex of about 850 to 900 kDa that forms two stacked rings, 12 to 16 nm in diameter.

The protein resides in the cytoplasm. Its function is as follows. Molecular chaperone; assists the folding of proteins upon ATP hydrolysis. Known to play a role, in vitro, in the folding of actin and tubulin. In Arabidopsis thaliana (Mouse-ear cress), this protein is T-complex protein 1 subunit zeta 1.